The primary structure comprises 1503 residues: Rho GTPase-activating protein 5 (1503 aa).

FF domains follow at residues 267–325 (QLVV…HIEQ), 366–420 (KLME…HVQH), 427–481 (RIEM…HQRE), and 482–548 (IVEK…HIGF). 3'-nitrotyrosine is present on Tyr-550. Phosphoserine occurs at positions 590 and 765. The pG1 pseudoGTPase domain occupies 590 to 763 (STNIDKVNLF…LESVKHNLDV (174 aa)). A pG2 pseudoGTPase domain is found at 779-944 (RIVMCAMCGD…FSDVLEKKNM (166 aa)). Phosphoserine occurs at positions 951 and 968. Disordered stretches follow at residues 975 to 1004 (YNNY…LPTP), 1022 to 1050 (HSTP…PKTN), and 1069 to 1091 (NPRK…SDNY). Residues 1036–1045 (VPPPIKPKPV) are compositionally biased toward pro residues. Ser-1115 carries the phosphoserine modification. Disordered regions lie at residues 1129–1157 (NTQG…YKYK) and 1169–1255 (YRRT…TRRN). The segment covering 1141–1151 (RTSKGHGERRP) has biased composition (basic and acidic residues). Residues Ser-1196, Ser-1203, and Ser-1219 each carry the phosphoserine modification. Positions 1263–1450 (MPLQDLVTAE…TFIQQCQFFF (188 aa)) constitute a Rho-GAP domain.

May interact with RASA1/p120GAP. As to expression, expressed in spinal cord, cerebellum, kidney, testis and lung.

It is found in the cytoplasm. Its subcellular location is the cell membrane. Its function is as follows. GTPase-activating protein for Rho family members. The polypeptide is Rho GTPase-activating protein 5 (Arhgap5) (Mus musculus (Mouse)).